The following is a 314-amino-acid chain: Porphobilinogen deaminase (314 aa).

Cys242 bears the S-(dipyrrolylmethanemethyl)cysteine mark.

It belongs to the HMBS family. As to quaternary structure, monomer. The cofactor is dipyrromethane.

It catalyses the reaction 4 porphobilinogen + H2O = hydroxymethylbilane + 4 NH4(+). It functions in the pathway porphyrin-containing compound metabolism; protoporphyrin-IX biosynthesis; coproporphyrinogen-III from 5-aminolevulinate: step 2/4. Its function is as follows. Tetrapolymerization of the monopyrrole PBG into the hydroxymethylbilane pre-uroporphyrinogen in several discrete steps. The sequence is that of Porphobilinogen deaminase (hemC) from Buchnera aphidicola subsp. Acyrthosiphon pisum (strain APS) (Acyrthosiphon pisum symbiotic bacterium).